Here is a 137-residue protein sequence, read N- to C-terminus: Large ribosomal subunit protein uL16 (137 aa).

Belongs to the universal ribosomal protein uL16 family. As to quaternary structure, part of the 50S ribosomal subunit.

Functionally, binds 23S rRNA and is also seen to make contacts with the A and possibly P site tRNAs. This chain is Large ribosomal subunit protein uL16, found in Halorhodospira halophila (strain DSM 244 / SL1) (Ectothiorhodospira halophila (strain DSM 244 / SL1)).